The sequence spans 353 residues: MESAIGEHLQCPRTLTRRVPDTYTPPFPMWVGRADDTLHQVVMGYLGVQFRGEDQRPAALRAMRDIVAGFDLPDGPAHHDLTHHIDNQGYENLIVVGYWKDVSSQHRWSTSPPVSSWWESEDRLSDGLGFFREIVAPRAEQFETLYAFQDDLPGVGAVMDGVSGEINEHGYWGSMRERFPISQTDWMQASGELRVVAGDPAVGGRVVVRGHDNIALIRSGQDWADAEADERSLYLDEILPTLQSGMDFLRDNGPAVGCYSNRFVRNIDIDGNFLDLSYNIGHWASLDQLERWSESHPTHLRIFTTFFRVAEGLSKLRLYHEVSVFDAADQLYEYINCHPGTGMLRDAVITAEH.

Serine 219 provides a ligand contact to an aliphatic aldoxime. A heme b-binding site is contributed by histidine 299. Residue histidine 320 coordinates an aliphatic aldoxime. Residue histidine 320 is part of the active site.

This sequence belongs to the heme-containing dehydratase family. In terms of assembly, homodimer. It depends on heme b as a cofactor.

The catalysed reaction is an aliphatic aldoxime = a nitrile + H2O. Active when the heme iron is in the ferrous state. Activated by FMN, Fe(2+), Sn(2+), Na(2)SO(3), Na(2)S and vitamin K3. In terms of biological role, catalyzes the dehydration of aldoximes to their corresponding nitrile. Is active toward various arylalkyl- and alkyl-aldoximes, and to a lesser extent toward aryl-aldoximes. The chain is Aliphatic aldoxime dehydratase from Rhodococcus globerulus.